Reading from the N-terminus, the 528-residue chain is Autophagy-related protein 22 (528 aa).

Residues M1–L98 lie on the Cytoplasmic side of the membrane. A helical membrane pass occupies residues Y99–V119. The Vacuolar portion of the chain corresponds to D120–R130. A helical transmembrane segment spans residues I131 to D151. Topologically, residues T152 to Q153 are cytoplasmic. A helical transmembrane segment spans residues I154–V174. At G175–R210 the chain is on the vacuolar side. Residues G211–A231 form a helical membrane-spanning segment. The Cytoplasmic portion of the chain corresponds to S232–Q241. The chain crosses the membrane as a helical span at residues V242 to I262. Topologically, residues D263 to D318 are vacuolar. S278 carries the phosphoserine modification. The helical transmembrane segment at V319–T339 threads the bilayer. Over A340–T352 the chain is Cytoplasmic. A helical membrane pass occupies residues L353–I373. The Vacuolar segment spans residues P374 to T388. A helical transmembrane segment spans residues L389–F409. Residues N410 to K417 are Cytoplasmic-facing. A helical transmembrane segment spans residues F418–S438. Topologically, residues R439–Y485 are vacuolar. Residues S486–V506 form a helical membrane-spanning segment. Over K507 to D528 the chain is Cytoplasmic.

The protein belongs to the ATG22 family.

It is found in the vacuole membrane. Functionally, vacuolar effluxer which mediate the efflux of amino acids resulting from autophagic degradation. The release of autophagic amino acids allows the maintenance of protein synthesis and viability during nitrogen starvation. The sequence is that of Autophagy-related protein 22 (ATG22) from Saccharomyces cerevisiae (strain YJM789) (Baker's yeast).